Consider the following 939-residue polypeptide: UvrABC system protein A (939 aa).

An ATP-binding site is contributed by 32 to 39 (GLSGSGKS). Residues 252 to 279 (CADCGISIDELAPRMFSFNSPFGKCERC) form a C4-type zinc finger. 2 consecutive ABC transporter domains span residues 309–588 (WGDS…ENSL) and 608–936 (GNGN…KYLK). Residue 640 to 647 (GVSGSGKS) participates in ATP binding. The segment at 739-765 (CEACSGDGIIKIEMQFLSDVYVPCEVC) adopts a C4-type zinc-finger fold.

It belongs to the ABC transporter superfamily. UvrA family. In terms of assembly, forms a heterotetramer with UvrB during the search for lesions.

Its subcellular location is the cytoplasm. Functionally, the UvrABC repair system catalyzes the recognition and processing of DNA lesions. UvrA is an ATPase and a DNA-binding protein. A damage recognition complex composed of 2 UvrA and 2 UvrB subunits scans DNA for abnormalities. When the presence of a lesion has been verified by UvrB, the UvrA molecules dissociate. The protein is UvrABC system protein A of Clostridium perfringens (strain 13 / Type A).